Consider the following 441-residue polypeptide: Lysine histidine transporter-like 2 (441 aa).

Topologically, residues 1–32 (MEKSQSSPTKDASTKQKNVDDWLPITSSRNAK) are cytoplasmic. Residues 33-53 (WWYSAFHNVTAMVGAGVLSLP) form a helical membrane-spanning segment. Topologically, residues 54–58 (YAMSN) are extracellular. Residues 59–79 (LGWGPGVTIMIMSWLITFYTL) form a helical membrane-spanning segment. Topologically, residues 80-110 (WQMVQMHEMVPGKRFDRYHELGQHAFGEKLG) are cytoplasmic. The helical transmembrane segment at 111–131 (LWIVVPQQLIVEVGVDIVYMV) threads the bilayer. Topologically, residues 132-155 (TGGKSLKKIHDLLCTDCKNIRTTY) are extracellular. The next 2 helical transmembrane spans lie at 156 to 176 (WIMI…FNSI) and 177 to 197 (SIVS…AWAT). Topologically, residues 198–222 (SVKKGVHPNVDYSSRASTTSGNVFN) are extracellular. The helical transmembrane segment at 223-243 (FLNALGDVAFAYAGHNVVLEI) threads the bilayer. Over 244 to 264 (QATIPSTPEKPSKIAMWKGVV) the chain is Cytoplasmic. A helical membrane pass occupies residues 265–285 (VAYIVVAICYFPVAFVCYYIF). The Extracellular segment spans residues 286–300 (GNSVDDNILMTLEKP). Residues 301-321 (IWLIAIANAFVVVHVIGSYQI) traverse the membrane as a helical segment. The Cytoplasmic portion of the chain corresponds to 322-347 (YAMPVFDMLETFLVKKMMFAPSFKLR). A helical transmembrane segment spans residues 348–370 (FITRTLYVAFTMFVAICIPFFGG). The Extracellular segment spans residues 371–373 (LLG). The helical transmembrane segment at 374 to 396 (FFGGFAFAPTTYYLPCIMWLCIK) threads the bilayer. At 397 to 406 (KPKKYGLSWC) the chain is on the cytoplasmic side. Residues 407 to 427 (INWFCIVVGVILTILAPIGGL) traverse the membrane as a helical segment. Residues 428–441 (RTIIISAKNYEFFS) are Extracellular-facing.

The protein belongs to the amino acid/polyamine transporter 2 family. Amino acid/auxin permease (AAAP) (TC 2.A.18.2) subfamily.

It localises to the cell membrane. Its function is as follows. Amino acid transporter. In Arabidopsis thaliana (Mouse-ear cress), this protein is Lysine histidine transporter-like 2.